Here is a 57-residue protein sequence, read N- to C-terminus: Ribosome modulation factor (57 aa).

The segment at 1–28 (MKRQKRDRLERAQSQGYKAGLNGRSHDE) is disordered.

It belongs to the ribosome modulation factor family.

The protein resides in the cytoplasm. During stationary phase, converts 70S ribosomes to an inactive dimeric form (100S ribosomes). In Vibrio cholerae serotype O1 (strain MJ-1236), this protein is Ribosome modulation factor.